We begin with the raw amino-acid sequence, 479 residues long: Monodehydroascorbate reductase 1, peroxisomal (479 aa).

The Cytoplasmic portion of the chain corresponds to 1–3 (MGR). A helical membrane pass occupies residues 4–24 (AFEYVILGGGVAAGYAALEFV). Residues 12–15 (GGVA), Glu41, Arg48, Lys53, and 147–148 (RN) contribute to the FAD site. The Peroxisomal portion of the chain corresponds to 25 to 445 (RRNGGASSQE…QATGGGGKPT (421 aa)). NAD(+)-binding positions include 172–178 (GGYIGME), Arg202, and Gly260. NADP(+) is bound by residues 174-178 (YIGME), Arg202, and Gly260. Asp297 contacts FAD. Position 314 to 315 (314 to 315 (EH)) interacts with NAD(+). 314 to 315 (EH) is a binding site for NADP(+). Position 316 (Val316) interacts with FAD. Arg320 contacts L-ascorbate. Tyr347 lines the FAD pocket. Tyr347 is a binding site for NAD(+). Tyr347 provides a ligand contact to NADP(+). Arg349 is a binding site for L-ascorbate. The helical transmembrane segment at 446-466 (CAWHATVGVAAAVSIAAFACW) threads the bilayer. Topologically, residues 467–479 (YGWQAPYVLKRDF) are cytoplasmic.

This sequence belongs to the FAD-dependent oxidoreductase family. FAD is required as a cofactor.

It localises to the peroxisome membrane. The enzyme catalyses 2 monodehydro-L-ascorbate radical + NADH + H(+) = 2 L-ascorbate + NAD(+). Functionally, catalyzes the conversion of monodehydroascorbate to ascorbate, oxidizing NADH in the process. Ascorbate is a major antioxidant against reactive oxygen species (ROS) and nitric oxide (NO). The sequence is that of Monodehydroascorbate reductase 1, peroxisomal from Oryza sativa subsp. japonica (Rice).